A 93-amino-acid chain; its full sequence is Large ribosomal subunit protein bL31 (93 aa).

The segment at 68–93 (GSADAAADEKKPDAKNNNKDNTSKED) is disordered. Basic and acidic residues predominate over residues 74-93 (ADEKKPDAKNNNKDNTSKED).

It belongs to the bacterial ribosomal protein bL31 family. Type A subfamily. As to quaternary structure, part of the 50S ribosomal subunit.

In terms of biological role, binds the 23S rRNA. This is Large ribosomal subunit protein bL31 from Prochlorococcus marinus (strain MIT 9313).